We begin with the raw amino-acid sequence, 407 residues long: Arginine biosynthesis bifunctional protein ArgJ (407 aa).

Thr-169, Lys-192, Thr-203, Glu-283, Asn-402, and Ser-407 together coordinate substrate. The active-site Nucleophile is the Thr-203.

This sequence belongs to the ArgJ family. In terms of assembly, heterotetramer of two alpha and two beta chains.

The protein resides in the cytoplasm. It carries out the reaction N(2)-acetyl-L-ornithine + L-glutamate = N-acetyl-L-glutamate + L-ornithine. The catalysed reaction is L-glutamate + acetyl-CoA = N-acetyl-L-glutamate + CoA + H(+). The protein operates within amino-acid biosynthesis; L-arginine biosynthesis; L-ornithine and N-acetyl-L-glutamate from L-glutamate and N(2)-acetyl-L-ornithine (cyclic): step 1/1. Its pathway is amino-acid biosynthesis; L-arginine biosynthesis; N(2)-acetyl-L-ornithine from L-glutamate: step 1/4. In terms of biological role, catalyzes two activities which are involved in the cyclic version of arginine biosynthesis: the synthesis of N-acetylglutamate from glutamate and acetyl-CoA as the acetyl donor, and of ornithine by transacetylation between N(2)-acetylornithine and glutamate. In Mycobacterium leprae (strain TN), this protein is Arginine biosynthesis bifunctional protein ArgJ.